The primary structure comprises 242 residues: MKFSPAYLLAFAPIVAAHFRLQYPTSRGFNADTMANFPCGDLAQSSNRTQVSLSSGSFPVALRMGHDETAVEVLLALGNDPGTNFNITLHPTFRIEGLGEFCLPNVVFDESVLGTKITDGMNATLQVQSNGDPSGGLYACADIQFSTTAQDEKPSSCTNNTGISAIAFTGAAAERNANESTADGQAQSGSSGSSSDSGSHSGHSSATQTSSTTASSTAGAVALETAAWGILGAAVVGGLAVL.

An N-terminal signal peptide occupies residues 1–17; it reads MKFSPAYLLAFAPIVAA. Residues asparagine 47, asparagine 86, asparagine 122, asparagine 159, and asparagine 178 are each glycosylated (N-linked (GlcNAc...) asparagine). The tract at residues 176–214 is disordered; that stretch reads NANESTADGQAQSGSSGSSSDSGSHSGHSSATQTSSTTA. The segment covering 180 to 214 has biased composition (low complexity); that stretch reads STADGQAQSGSSGSSSDSGSHSGHSSATQTSSTTA. Alanine 218 is lipidated: GPI-like-anchor amidated alanine. Positions 219-242 are cleaved as a propeptide — removed in mature form; sequence GAVALETAAWGILGAAVVGGLAVL.

In terms of processing, the GPI-like anchor contains a phosphoceramide lipid group. The anchor position has not been determined.

It localises to the cell membrane. This is an uncharacterized protein from Aspergillus fumigatus (strain ATCC MYA-4609 / CBS 101355 / FGSC A1100 / Af293) (Neosartorya fumigata).